Here is a 2774-residue protein sequence, read N- to C-terminus: MDVKDRRHRSLTRGRCGKECRYTSSSLDSEDCRVPTQKSYSSSETLKAYDHDSRMHYGNRVTDLVHRESDEFSRQGANFTLAELGICEPSPHRSGYCSDMGILHQGYSLSTGSDADSDTEGGMSPEHAIRLWGRGIKSRRSSGLSSRENSALTLTDSDNENKSDDDNGRPIPPTSSSSLLPSAQLPSSHNPPPVSCQMPLLDSNTSHQIMDTNPDEEFSPNSYLLRACSGPQQASSSGPPNHHSQSTLRPPLPPPHNHTLSHHHSSANSLNRNSLTNRRSQIHAPAPAPNDLATTPESVQLQDSWVLNSNVPLETRHFLFKTSSGSTPLFSSSSPGYPLTSGTVYTPPPRLLPRNTFSRKAFKLKKPSKYCSWKCAALSAIAAALLLAILLAYFIAMHLLGLNWQLQPADGHTFNNGVRTGLPGNDDVATVPSGGKVPWSLKNSSIDSGEAEVGRRVTQEVPPGVFWRSQIHISQPQFLKFNISLGKDALFGVYIRRGLPPSHAQYDFMERLDGKEKWSVVESPRERRSIQTLVQNEAVFVQYLDVGLWHLAFYNDGKDKEMVSFNTVVLDSVQDCPRNCHGNGECVSGLCHCFPGFLGADCAKAACPVLCSGNGQYSKGTCQCYSGWKGAECDVPMNQCIDPSCGGHGSCIDGNCVCAAGYKGEHCEEVDCLDPTCSSHGVCVNGECLCSPGWGGLNCELARVQCPDQCSGHGTYLPDSGLCNCDPNWMGPDCSVEVCSVDCGTHGVCIGGACRCEEGWTGAACDQRVCHPRCIEHGTCKDGKCECREGWNGEHCTIGRQTAGTETDGCPDLCNGNGRCTLGQNSWQCVCQTGWRGPGCNVAMETSCADNKDNEGDGLVDCLDPDCCLQSACQNSLLCRGSRDPLDIIQQGQTDWPAVKSFYDRIKLLAGKDSTHIIPGDNPFNSSLVSLIRGQVVTTDGTPLVGVNVSFVKYPKYGYTITRQDGTFDLIANGGSALTLHFERAPFMSRERTVWPPWNSFYAMDTLVMKTEENSIPSCDLSGFVRPDPIIISSPLSTFFSASPAANPIVPETQVLHEEIELPGTNVKLRYLSSRTAGYKSLLKITMTQSTVPLNLIRVHLMVAVEGHLFQKSFQASPNLAYTFIWDKTDAYGQRVYGLSDAVVSVGFEYETCPSLILWEKRTALLQGFELDPSNLGGWSLDKHHTLNVKSGILLKGTGENQFLTQQPAIITSIMGNGRRRSISCPSCNGLAEGNKLLAPVALAVGIDGSLFVGDFNYIRRIFPSRNVTSILELRNKEFKHSNSPGHKYYLAVDPVTGSLYVSDTNSRRIYRVKSLSGAKDLAGNSEVVAGTGEQCLPFDEARCGDGGKAVDATLMSPRGIAVDKNGLMYFVDATMIRKVDQNGIISTLLGSNDLTAVRPLSCDSSMDVAQVRLEWPTDLAVNPMDNSLYVLENNVILRITENHQVSIIAGRPMHCQVPGIDYSLSKLAIHSALESASAIAISHTGVLYITETDEKKINRLRQVTTNGEICLLAGAASDCDCKNDVNCICYSGDDAYATDAILNSPSSLAVAPDGTIYIADLGNIRIRAVSKNKPVLNAFNQYEAASPGEQELYVFNADGIHQYTVSLVTGEYLYNFTYSADNDVTELIDNNGNSLKIRRDSSGMPRHLLMPDNQIITLTVGTNGGLKAVSTQNLELGLMTYDGNTGLLATKSDETGWTTFYDYDHEGRLTNVTRPTGVVTSLHREMEKSITVDIENSNRDNDVTVITNLSSVEASYTVVQDQVRNSYQLCSNGTLRVMYANGMGVSFHSEPHVLAGTLTPTIGRCNISLPMENGLNSIEWRLRKEQIKGKVTIFGRKLRVHGRNLLSIDYDRNIRTEKIYDDHRKFTLRIIYDQVGRPFLWLPSSGLAAVNVSYFFNGRLAGLQRGAMSERTDIDKQGRIVSRMFADGKVWSYSYLDKSMVLLLQSQRQYIFEYDSSDRLHAVTMPSVARHSMSTHTSIGYIRNIYNPPESNASVIFDYSDDGRILKTSFLGTGRQVFYKYGKLSKLSEIVYDSTAVTFGYDETTGVLKMVNLQSGGFSCTIRYRKVGPLVDKQIYRFSEEGMINARFDYTYHDNSFRIASIKPVISETPLPVDLYRYDEISGKVEHFGKFGVIYYDINQIITTAVMTLSKHFDTHGRIKEVQYEMFRSLMYWMTVQYDSMGRVIKRELKLGPYANTTKYTYDYDGDGQLQSVAVNDRPTWRYSYDLNGNLHLLNPGNSARLMPLRYDLRDRITRLGDVQYKIDDDGYLCQRGSDIFEYNSKGLLTRAYNKASGWSVQYRYDGVSRRASYKTNLGHHLQYFYSDLHHPTRITHVYNHSNSEITSLYYDLQGHLFAMESSSGEEYYVASDNTGTPLAVFSINGLMIKQLQYTAYGEIYYDSNPDFQMVIGFHGGLYDPLTKLVHFTQRDYDVLAGRWTSPDYTMWRNVGKEPAPFNLYMFKNNNPLSNELDLKNYVTDVKSWLVMFGFQLSNIIPGFPRAKMYFVPPPYELSESQASENGQLITGVQQTTERHNQAFLALEGQVISKKLHAGIREKAGHWFATTTPIIGKGIMFAIKEGRVTTGVSSIASEDSRKVASVLNNAYYLDKMHYSIEGKDTHYFVKIGAADGDLVTLGTTIGRKVLESGVNVTVSQPTLLVNGRTRRFTNIEFQYSTLLLSIRYGLTPDTLDEEKARVLDQARQRALGTAWAKEQQKARDGREGSRLWTEGEKQQLLSTGRVQGYEGYYVLPVEQYPELADSSSNIQFLRQNEMGKR.

The Teneurin N-terminal domain maps to 1–375; it reads MDVKDRRHRS…KPSKYCSWKC (375 aa). At 1-379 the chain is on the cytoplasmic side; sequence MDVKDRRHRS…YCSWKCAALS (379 aa). A phosphoserine mark is found at S90 and S124. The segment at 111–271 is disordered; the sequence is TGSDADSDTE…HHHSSANSLN (161 aa). Residues 141–155 show a composition bias toward polar residues; sequence SSGLSSRENSALTLT. T155 is modified (phosphothreonine). Position 157 is a phosphoserine (S157). Over residues 159-168 the composition is skewed to basic and acidic residues; sequence NENKSDDDNG. The segment covering 174-188 has biased composition (low complexity); that stretch reads TSSSSLLPSAQLPSS. Positions 202-211 are enriched in polar residues; sequence DSNTSHQIMD. Over residues 229 to 240 the composition is skewed to low complexity; the sequence is SGPQQASSSGPP. Residues 380–400 form a helical membrane-spanning segment; it reads AIAAALLLAILLAYFIAMHLL. Residues 401–2774 lie on the Extracellular side of the membrane; the sequence is GLNWQLQPAD…FLRQNEMGKR (2374 aa). N443 and N482 each carry an N-linked (GlcNAc...) asparagine glycan. 8 consecutive EGF-like domains span residues 575 to 603, 605 to 634, 636 to 668, 669 to 701, 702 to 735, 738 to 766, 769 to 797, and 808 to 841; these read DCPR…ADCA, AACP…AECD, PMNQ…EHCE, EVDC…NCEL, ARVQ…PDCS, VCSV…AACD, VCHP…EHCT, and DGCP…PGCN. Intrachain disulfides connect C576–C586, C580–C591, C593–C602, C611–C622, C624–C633, C640–C651, C645–C656, C658–C667, C672–C683, C677–C688, C690–C699, C710–C723, C725–C734, C739–C749, C743–C754, C756–C765, C770–C780, C774–C785, C787–C796, C810–C820, C814–C829, and C831–C840. N925, N948, and N1267 each carry an N-linked (GlcNAc...) asparagine glycan. 5 NHL repeats span residues 1272–1316, 1342–1386, 1401–1452, 1474–1501, and 1530–1573; these read LELR…VKSL, ARCG…NGII, LSCD…IAGR, LESA…INRL, and CYSG…VSKN. The YD 1 repeat unit spans residues 1583–1602; the sequence is YEAASPGEQELYVFNADGIH. N-linked (GlcNAc...) asparagine glycosylation occurs at N1616. 3 YD repeats span residues 1619-1639, 1682-1701, and 1702-1724; these read YSAD…LKIR, YDGN…WTTF, and YDYD…TSLH. N-linked (GlcNAc...) asparagine glycans are attached at residues N1712, N1749, N1773, N1807, and N1892. 18 YD repeats span residues 1895-1914, 1936-1954, 1955-1975, 1982-1999, 2000-2021, 2022-2039, 2042-2062, 2065-2085, 2093-2113, 2119-2136, 2137-2163, 2165-2178, 2179-2202, 2205-2225, 2226-2246, 2248-2268, 2280-2300, and 2302-2322; these read YFFN…ERTD, YLDK…YIFE, YDSS…HSMS, YIRN…VIFD, YSDD…VFYK, YGKL…TAVT, YDET…FSCT, YRKV…EGMI, YHDN…TPLP, YDEI…GVIY, YDIN…IKEV, YEMF…MTVQ, YDSM…TKYT, YDGD…WRYS, YDLN…LMPL, YDLR…DDDG, YNSK…SVQY, and YDGV…LQYF. A glycan (N-linked (GlcNAc...) asparagine) is linked at N1993. The N-linked (GlcNAc...) asparagine glycan is linked to N2197. N2337 carries an N-linked (GlcNAc...) asparagine glycan. Residues 2348–2389 form a YD 23 repeat; it reads YDLQGHLFAMESSSGEEYYVASDNTGTPLAVFSINGLMIKQL. N2648 carries an N-linked (GlcNAc...) asparagine glycan.

It belongs to the tenascin family. Teneurin subfamily. As to quaternary structure, homodimer; disulfide-linked. Heterodimer with either TENM1 or TENM3. May also form heterodimer with TENM4. Interacts with ADGRL1 isoform 2. Post-translationally, derives from the membrane form by proteolytic processing. In terms of processing, derives from the plasma membrane form by proteolytic cleavage and translocates to the nucleus. Homophilic binding of the C-terminal extracellular domain stimulates its proteolytic cleavage and release in the cytoplasmic. Is subjected to rapid degradation by the proteasome pathway. Expressed in the brain (at protein level).

The protein resides in the cell membrane. It localises to the presynaptic cell membrane. The protein localises to the postsynaptic cell membrane. It is found in the endoplasmic reticulum. Its subcellular location is the golgi apparatus. The protein resides in the synapse. It localises to the cell projection. The protein localises to the dendritic spine. It is found in the filopodium. Its subcellular location is the growth cone. The protein resides in the nucleus. It localises to the PML body. Involved in neural development, regulating the establishment of proper connectivity within the nervous system. Acts as a ligand of the ADGRL1 and ADGRL3 receptors that are expressed at the surface of adjacent cells. Promotes the formation of filopodia and enlarged growth cone in neuronal cells. Mediates axon guidance and homophilic and heterophilic cell-cell adhesion. May function as a cellular signal transducer. In terms of biological role, induces gene transcription inhibition. The protein is Teneurin-2 (Tenm2) of Rattus norvegicus (Rat).